A 780-amino-acid polypeptide reads, in one-letter code: Carboxysome assembly protein CsoS2 (780 aa).

Over residues 1 to 15 (MARLSSRELALERRK) the composition is skewed to basic and acidic residues. Disordered regions lie at residues 1–173 (MARL…RAIE), 189–212 (KHGK…NPDL), 226–281 (TKAG…NRSV), 330–349 (NRVT…DEPG), and 382–444 (SLTQ…TGVT). The stretch at 5–24 (SSRELALERRKALTTSGKKS) is one N-repeat 1 repeat. Over residues 48-78 (AAAAVEPTAPAVSAPVKPTVSFTPASPSSSS) the composition is skewed to low complexity. Residues 86–105 (PSRDLVLARRDALSRRGKTA) form an N-repeat 2 repeat. Residues 86–116 (PSRDLVLARRDALSRRGKTADTSRDRNRADV) show a composition bias toward basic and acidic residues. Over residues 117–130 (ARQTQAAAPVAASA) the composition is skewed to low complexity. 2 N-repeat repeats span residues 175 to 194 (PSRA…GKTA) and 213 to 235 (TSRE…NKQS). M-repeat repeat units lie at residues 260–309 (KVGE…QTFC), 320–369 (KVRV…AAYC), 378–417 (KVGH…GDQY), 431–480 (KVGQ…NAFC), 490–535 (KVGF…LENA), and 541–599 (TSAV…ATAC). The interval 260–608 (KVGESTTSTG…CGNEAPAGTD (349 aa)) is middle region. Low complexity predominate over residues 264 to 276 (STTSTGQTVTGTQ). 2 stretches are compositionally biased toward low complexity: residues 387-403 (GRPV…SVTG) and 432-444 (VGQS…TGVT). The segment at 609–749 (SHGQAPEGAA…ATVPHERKRN (141 aa)) is C-terminal domain. 2 C-repeat repeats span residues 623–669 (SVMS…TEQF) and 693–726 (EQPA…EGVS). Disordered regions lie at residues 631-661 (AQQQ…LAGG) and 686-780 (AVVS…GARG). Positions 641-651 (VTGTSYEQGNR) are enriched in polar residues. The span at 709–720 (TGDDWDRGEHVT) shows a compositional bias: basic and acidic residues. The C-terminal peptide stretch occupies residues 750 to 780 (EENEWPVSRVTGSSGNTEKGSLITVSGGARG). Over residues 759 to 768 (VTGSSGNTEK) the composition is skewed to polar residues.

The protein belongs to the CsoS2 family. In terms of assembly, interacts via its N-terminal repeats with RuBisCO. Interacts with the major shell protein CsoS1. In terms of processing, unlike H.neapolitanus and predictions for P.marinus strain MIT 9313, this protein is not thought to have ribosomal frameshifting.

Required for alpha-carboxysome (Cb) assembly, mediates interaction between RuBisCO and the carboxysome shell. The protein is probably intrinsically disordered. The C-terminal repeats act as the encapsulation signal to target proteins to the Cb; they are necessary and sufficient to target both CsoS2 and foreign proteins to the Cb. The N-terminal repeats of this protein bind simultaneously to both subunits of RuBisCO. Probably also interacts with the major shell proteins (CsoS1); that interaction would increase the local concentration of CsoS2 so that it can condense RuBisCO and full carboxysomes can be formed. This is Carboxysome assembly protein CsoS2 from Parasynechococcus marenigrum (strain WH8102).